We begin with the raw amino-acid sequence, 371 residues long: Peptide chain release factor 2 (371 aa).

An N5-methylglutamine modification is found at Gln-252.

Belongs to the prokaryotic/mitochondrial release factor family. Methylated by PrmC. Methylation increases the termination efficiency of RF2.

The protein resides in the cytoplasm. Peptide chain release factor 2 directs the termination of translation in response to the peptide chain termination codons UGA and UAA. This is Peptide chain release factor 2 from Staphylococcus haemolyticus (strain JCSC1435).